Reading from the N-terminus, the 338-residue chain is 1-aminocyclopropane-1-carboxylate deaminase (338 aa).

N6-(pyridoxal phosphate)lysine is present on Lys-51. Ser-78 functions as the Nucleophile in the catalytic mechanism.

The protein belongs to the ACC deaminase/D-cysteine desulfhydrase family. Homotrimer. Pyridoxal 5'-phosphate serves as cofactor.

The enzyme catalyses 1-aminocyclopropane-1-carboxylate + H2O = 2-oxobutanoate + NH4(+). In terms of biological role, catalyzes a cyclopropane ring-opening reaction, the irreversible conversion of 1-aminocyclopropane-1-carboxylate (ACC) to ammonia and alpha-ketobutyrate. Allows growth on ACC as a nitrogen source. This is 1-aminocyclopropane-1-carboxylate deaminase from Burkholderia orbicola (strain MC0-3).